A 1081-amino-acid chain; its full sequence is Inversin (1081 aa).

16 ANK repeats span residues 13-42, 47-76, 80-110, 113-144, 148-177, 181-213, 220-250, 254-283, 288-317, 321-350, 356-385, 389-418, 422-451, 455-484, 488-517, and 523-553; these read SLAS…ALKD, FGRT…DVNK, SQRT…WMQK, EEMT…EVDT, NKQT…NIGI, EGKI…TESL, EGRT…NITS, LFRT…SGTI, QGAT…VKDD, EGRT…DIDI, YGGT…QVDA, MKHT…RVDL, DGHS…NPNV, AGRT…DPNI, EGRT…FPNQ, and ERYT…SIAA. Residue N75 is modified to 3-hydroxyasparagine. Residues 490 to 498 carry the D-box 1 motif; the sequence is RTALHWSCN. The 30-residue stretch at 555–584 folds into the IQ 1 domain; it reads QDIAAFKIQAVYKGYKVRKAFRDRKNLLMK. Residues 589-610 are compositionally biased toward basic and acidic residues; it reads RKDAAAKKREEENKRREAEQQK. Residues 589-889 are disordered; the sequence is RKDAAAKKRE…PAPGPLSGQS (301 aa). Polar residues predominate over residues 638–649; the sequence is RAPSKQPPSSEA. Composition is skewed to basic and acidic residues over residues 688–698, 724–740, and 772–785; these read KPNESPREQCK, EKSR…DKGK, and DGHR…DTAS. Over residues 863–872 the composition is skewed to polar residues; sequence SGTSTLSEDA. The D-box 2 motif lies at 910–918; that stretch reads RKELFRKKN. The region spanning 917-946 is the IQ 2 domain; sequence KNKAAAVIQRAWRSYQLRKHLSHLLHMKEL. Residues 1022 to 1050 form an ANK 17 repeat; that stretch reads RTHSVLHLNSVSNLQCIHLLENSGRSKNF. Residues 1051-1061 are compositionally biased toward polar residues; the sequence is SYNLQSATPPK. Residues 1051 to 1081 form a disordered region; it reads SYNLQSATPPKTKTKLRPSLEEECVRGSWNS.

In terms of assembly, binds calmodulin via its IQ domains. Interacts with APC2. Interacts with alpha-, beta-, and gamma-catenin. Interacts with N-cadherin (CDH2). Interacts with NPHP1. Interacts with DVL1, PRICKLE (PRICKLE1 or PRICKLE2) and Strabismus (VANGL1 or VANGL2). Component of a complex containing at least ANKS6, INVS, NEK8 and NPHP3. ANKS6 may organize complex assembly by linking INVS and NPHP3 to NEK8 and INVS may target the complex to the proximal ciliary axoneme. Interacts with IQCB1; the interaction likely requires additional interactors. Interacts with microtubules. In terms of processing, may be ubiquitinated via its interaction with APC2. Hydroxylated at Asn-75, most probably by HIF1AN.

It localises to the cytoplasm. It is found in the cytoskeleton. The protein resides in the membrane. The protein localises to the spindle. Its subcellular location is the nucleus. In terms of biological role, required for normal renal development and establishment of left-right axis. Probably acts as a molecular switch between different Wnt signaling pathways. Inhibits the canonical Wnt pathway by targeting cytoplasmic disheveled (DVL1) for degradation by the ubiquitin-proteasome. This suggests that it is required in renal development to oppose the repression of terminal differentiation of tubular epithelial cells by Wnt signaling. Involved in the organization of apical junctions in kidney cells together with NPHP1, NPHP4 and RPGRIP1L/NPHP8. Does not seem to be strictly required for ciliogenesis. The chain is Inversin (INVS) from Canis lupus familiaris (Dog).